The primary structure comprises 149 residues: Calmodulin (149 aa).

A2 bears the N-acetylalanine mark. EF-hand domains lie at 8 to 43, 44 to 79, 81 to 116, and 117 to 149; these read EQIAEFKEAGSLFDKDGDGTITTKELGTVMRSVGQN, PTEAELQDMINEVDADGNGTIDFPEFLTMMARKMKD, DSEEEILEAFQGFDKDGNGFISAAELRHMMTNLGEK, and LTDEEVDEMIREADIDGDGQINYEEFVKMMMSK. The Ca(2+) site is built by D21, D23, D25, T27, E32, D57, D59, N61, T63, E68, D94, D96, N98, E105, D130, D132, D134, Q136, and E141.

The protein belongs to the calmodulin family.

Calmodulin mediates the control of a large number of enzymes, ion channels and other proteins by Ca(2+). Among the enzymes to be stimulated by the calmodulin-Ca(2+) complex are a number of protein kinases and phosphatases. This Achlya klebsiana protein is Calmodulin (CMD1).